A 397-amino-acid polypeptide reads, in one-letter code: ATP-dependent RNA helicase RhlB (397 aa).

Residues 9–37 carry the Q motif motif; it reads TRFHDFNLAPSLMHAIHDLGFPYCTPIQA. Residues 40-220 enclose the Helicase ATP-binding domain; the sequence is LGFTLRGQDA…KQWTVDPAIV (181 aa). 53 to 60 is a binding site for ATP; that stretch reads AQTGTGKT. The short motif at 166–169 is the DEAD box element; that stretch reads DEAD. A Helicase C-terminal domain is found at 243-393; the sequence is DKYKLLYNLV…MPPAELLKPV (151 aa).

This sequence belongs to the DEAD box helicase family. RhlB subfamily. In terms of assembly, component of the RNA degradosome, which is a multiprotein complex involved in RNA processing and mRNA degradation.

The protein localises to the cytoplasm. The catalysed reaction is ATP + H2O = ADP + phosphate + H(+). Functionally, DEAD-box RNA helicase involved in RNA degradation. Has RNA-dependent ATPase activity and unwinds double-stranded RNA. The chain is ATP-dependent RNA helicase RhlB from Pseudomonas aeruginosa (strain UCBPP-PA14).